The primary structure comprises 561 residues: DNA ligase (561 aa).

Glutamate 249 provides a ligand contact to ATP. Lysine 251 functions as the N6-AMP-lysine intermediate in the catalytic mechanism. Positions 256, 271, 301, 340, 417, and 423 each coordinate ATP.

This sequence belongs to the ATP-dependent DNA ligase family. Mg(2+) serves as cofactor.

The catalysed reaction is ATP + (deoxyribonucleotide)n-3'-hydroxyl + 5'-phospho-(deoxyribonucleotide)m = (deoxyribonucleotide)n+m + AMP + diphosphate.. In terms of biological role, DNA ligase that seals nicks in double-stranded DNA during DNA replication, DNA recombination and DNA repair. This Methanothermobacter thermautotrophicus (strain ATCC 29096 / DSM 1053 / JCM 10044 / NBRC 100330 / Delta H) (Methanobacterium thermoautotrophicum) protein is DNA ligase.